The following is a 199-amino-acid chain: MEKLSFEEGKFAVKFARINIECYLSGVHYVVDDLPPIFKKPRGVFTTLYTYPKRNLRGCIGIPEPVMPLIDALKEASISASVDDPRFPPVGRMELRDITIEISILTPPKLVEANSPADYLEKIKVGRDGLIIEYGTYRGLLLPQVPIEHNWDIGEYLANLCLKAGLPVDTWIKKKVNIYSFESQIFKELSPNGKIVEEK.

The AMMECR1 domain occupies 7–197 (EEGKFAVKFA…ELSPNGKIVE (191 aa)).

The chain is Protein Maeo_0138 from Methanococcus aeolicus (strain ATCC BAA-1280 / DSM 17508 / OCM 812 / Nankai-3).